A 1056-amino-acid chain; its full sequence is Kinesin-like protein KIN-5A (1056 aa).

The interval 1–44 (MDRRIGLTSPSPKSTEKSGRDLRSGGDANGGANTNSNSIPRGDK) is disordered. Basic and acidic residues predominate over residues 14-24 (STEKSGRDLRS). A Kinesin motor domain is found at 49–395 (NVQVILRCRP…LDYAHRAKNI (347 aa)). 135 to 142 (GQTGTGKT) contacts ATP. Positions 443–525 (QEEAEKKAMT…STIKEKEYVI (83 aa)) form a coiled coil.

Belongs to the TRAFAC class myosin-kinesin ATPase superfamily. Kinesin family. KIN-5/BimC subfamily.

The protein resides in the cytoplasm. It localises to the cytoskeleton. Its subcellular location is the spindle. Responsible for microtubule translocation. May be important for the organization of phragmoplast-specific arrays of microtubules. Plays an essential role in stabilizing the mitotic spindle. Required during mitotic cytokinesis. The protein is Kinesin-like protein KIN-5A of Oryza sativa subsp. japonica (Rice).